The primary structure comprises 538 residues: Transmembrane protein 266 (538 aa).

Residues 1-102 (MALVTSFNMA…VFLLSASLNS (102 aa)) are Cytoplasmic-facing. A helical membrane pass occupies residues 103–123 (FLVACVILVVILLTLELLIDT). Residues 124–130 (KLLQFSN) are Extracellular-facing. The helical transmembrane segment at 131 to 151 (AFQFAGVIHWISLVILSVFFS) threads the bilayer. The Cytoplasmic segment spans residues 152-169 (ETVLRIVVLGIWDYIENK). A helical transmembrane segment spans residues 170–190 (IEVFDGAVIILSLAPMVASTV). The Extracellular segment spans residues 191 to 199 (ANGPRSPWD). The helical transmembrane segment at 200 to 220 (AISLIIMFRIWRVKRVIDAYV) threads the bilayer. The Cytoplasmic portion of the chain corresponds to 221-538 (LPVKLEMEMV…EPKLHTVPEA (318 aa)). Positions 232–278 (QQYEKAKAIQDEQLERLTQICQEQGFEIRQLRAHLAQQDLDLAAERE) form a coiled coil. Disordered stretches follow at residues 380 to 435 (NSTC…PLPL) and 453 to 483 (SSLS…VQTS). Residues 381-396 (STCASATSETTSHSTC) are compositionally biased toward low complexity. The span at 397–417 (GSVTRAQSASSQTLGSSTDCS) shows a compositional bias: polar residues. The span at 425 to 434 (PSKPRSSPLP) shows a compositional bias: low complexity.

In terms of assembly, homodimer; disulfide-linked. In brain, present in the granule layer of the cerebellar cortex. Localizes on the post-synaptic side of glutamatergic mossy fibers and granule cells in the cerebellum (at protein level). As to expression, predominantly expressed in granule cells in cerebellum (at protein level).

The protein resides in the cell projection. It localises to the dendrite. It is found in the perikaryon. Its subcellular location is the cell membrane. Functionally, voltage-sensor protein present on the post-synaptic side of glutamatergic mossy fibers and granule cells in the cerebellum. Despite the presence of a voltage-sensor segment, does not form a functional ion channel and its precise role remains unclear. Undergoes both rapid and slow structural rearrangements in response to changes in voltage. Contains a zinc-binding site that can regulate the slow conformational transition. The chain is Transmembrane protein 266 from Mus musculus (Mouse).